A 175-amino-acid chain; its full sequence is Transcriptional repressor NrdR (175 aa).

Residues 3-32 (CPYCSHPDSKVIDSRDVDDGVRRRRECVVC) fold into a zinc finger. The region spanning 47–137 (LFVVKKDQRR…VYREFTDITQ (91 aa)) is the ATP-cone domain.

It belongs to the NrdR family. Requires Zn(2+) as cofactor.

In terms of biological role, negatively regulates transcription of bacterial ribonucleotide reductase nrd genes and operons by binding to NrdR-boxes. This is Transcriptional repressor NrdR from Dehalococcoides mccartyi (strain ATCC BAA-2100 / JCM 16839 / KCTC 5957 / BAV1).